A 526-amino-acid polypeptide reads, in one-letter code: Delayed-rectifier potassium channel regulatory subunit KCNS1 (526 aa).

The Cytoplasmic segment spans residues 1-217 (MLMLLVRGTH…LTMENPGYSL (217 aa)). Residues 218 to 239 (PSKLFSCVSISVVLASIAAMCI) traverse the membrane as a helical segment. Residues 240–270 (HSLPEYQAREAAAAVAAVAAGRSPEGVRDDP) lie on the Extracellular side of the membrane. The helical transmembrane segment at 271–293 (VLRRLEYFCIAWFSFEVSSRLLL) threads the bilayer. Residues 294 to 304 (APSTRNFFCHP) lie on the Cytoplasmic side of the membrane. Residues 305-322 (LNLIDIVSVLPFYLTLLA) form a helical membrane-spanning segment. Residues 323-337 (GVALGDQGGKEFGHL) lie on the Extracellular side of the membrane. Residues 338–358 (GKVVQVFRLMRIFRVLKLARH) traverse the membrane as a helical; Voltage-sensor segment. Over 359 to 373 (STGLRSLGATLKHSY) the chain is Cytoplasmic. Residues 374-395 (REVGILLLYLAVGVSVFSGVAY) form a helical membrane-spanning segment. Over 396–408 (TAEKEEDVGFNTI) the chain is Extracellular. Positions 409–420 (PACWWWGTVSMT) form an intramembrane region, helical. The Selectivity filter motif lies at 421 to 426 (TVGYGD). An intramembrane segment occupies 421–428 (TVGYGDVV). Residues 429-435 (PVTVAGK) are Extracellular-facing. The helical transmembrane segment at 436–464 (LAASGCILGGILVVALPITIIFNKFSHFY) threads the bilayer. Residues 465-526 (RRQKALEAAV…PSEPPHPQRY (62 aa)) are Cytoplasmic-facing. The segment at 492-526 (VSEASLETSGETSQEGRSADLESQAPSEPPHPQRY) is disordered. Residues 496-507 (SLETSGETSQEG) are compositionally biased toward polar residues.

Belongs to the potassium channel family. S (TC 1.A.1.2) subfamily. Kv9.1/KCNS1 sub-subfamily. As to quaternary structure, heterotetramer with KCNB1. Heterotetramer with KCNB2. Does not form homomultimers.

The protein resides in the cell membrane. Potassium channel regulatory subunit that modulate the delayed rectifier voltage-gated potassium channel activity of KCNB1 and KCNB2 by altering their kinetics, expression levels, and shifting the half-inactivation potential to more polarized values. While it does not form functional channels on its own, it can form functional heterotetrameric channels with KCNB1 and KCNB2. Each regulatory subunit has unique regulatory properties that can lead to extensive inhibition, significant changes in kinetics, and/or substantial shifts in the voltage dependencies of the inactivation process. The protein is Delayed-rectifier potassium channel regulatory subunit KCNS1 of Gorilla gorilla gorilla (Western lowland gorilla).